Reading from the N-terminus, the 149-residue chain is Large ribosomal subunit protein bL9 (149 aa).

It belongs to the bacterial ribosomal protein bL9 family.

Binds to the 23S rRNA. The polypeptide is Large ribosomal subunit protein bL9 (Klebsiella pneumoniae subsp. pneumoniae (strain ATCC 700721 / MGH 78578)).